The following is a 168-amino-acid chain: Protein SprT (168 aa).

One can recognise a SprT-like domain in the interval 20–166; that stretch reads EKLQQANKYL…RHCQAILQLI (147 aa). Histidine 78 is a binding site for Zn(2+). Glutamate 79 is a catalytic residue. Histidine 82 contacts Zn(2+).

This sequence belongs to the SprT family. Requires Zn(2+) as cofactor.

Its subcellular location is the cytoplasm. This chain is Protein SprT, found in Proteus mirabilis (strain HI4320).